A 169-amino-acid polypeptide reads, in one-letter code: Nicotinamide-nucleotide adenylyltransferase (169 aa).

Belongs to the archaeal NMN adenylyltransferase family.

It is found in the cytoplasm. It carries out the reaction beta-nicotinamide D-ribonucleotide + ATP + H(+) = diphosphate + NAD(+). It functions in the pathway cofactor biosynthesis; NAD(+) biosynthesis; NAD(+) from nicotinamide D-ribonucleotide: step 1/1. This is Nicotinamide-nucleotide adenylyltransferase from Picrophilus torridus (strain ATCC 700027 / DSM 9790 / JCM 10055 / NBRC 100828 / KAW 2/3).